Consider the following 761-residue polypeptide: Protein PHTF1 (761 aa).

Residues 6-150 (RDAISWYQKK…VHCQIVSTQI (145 aa)) form the PHTF domain. 3 consecutive transmembrane segments (helical) span residues 77-97 (GLVR…VTSL), 99-119 (IFVW…LYLL), and 121-141 (PIVS…MGTV). A disordered region spans residues 152–184 (RPSGNNGNRRRRKLRKTVNGDGSRDNGNNSPDK). Over residues 170–181 (NGDGSRDNGNNS) the composition is skewed to low complexity. N179 and N224 each carry an N-linked (GlcNAc...) asparagine glycan. A phosphoserine mark is found at S272, S276, S277, S333, and S335. Positions 345–414 (VFSQGSRSGM…NTIHSGTKRD (70 aa)) are disordered. The segment covering 347-363 (SQGSRSGMSGGSRSLNL) has biased composition (low complexity). Residue N362 is glycosylated (N-linked (GlcNAc...) asparagine). The span at 364–375 (SRRDSESTRHDS) shows a compositional bias: basic and acidic residues. A glycan (N-linked (GlcNAc...) asparagine) is linked at N430. Transmembrane regions (helical) follow at residues 472-492 (GVGY…FPFL), 514-534 (TLFC…INFI), 610-630 (VVVS…CAQV), and 644-664 (WEFL…ASLG). N673 and N732 each carry an N-linked (GlcNAc...) asparagine glycan. Residues 736 to 756 (VVILSAVSGVISDLLGFNIRL) traverse the membrane as a helical segment.

In terms of assembly, interacts with FEM1B. Widely expressed with highest levels in testis.

It localises to the endoplasmic reticulum membrane. The protein resides in the golgi apparatus. It is found in the cis-Golgi network membrane. The chain is Protein PHTF1 from Mus musculus (Mouse).